Here is a 397-residue protein sequence, read N- to C-terminus: Argininosuccinate synthase (397 aa).

Position 8-16 (8-16 (AYSGGLDTS)) interacts with ATP. Residues Tyr86 and Ser91 each contribute to the L-citrulline site. Gly116 serves as a coordination point for ATP. L-aspartate contacts are provided by Thr118, Asn122, and Asp123. Asn122 provides a ligand contact to L-citrulline. L-citrulline-binding residues include Arg126, Ser175, Ser184, Glu260, and Tyr272.

This sequence belongs to the argininosuccinate synthase family. Type 1 subfamily. In terms of assembly, homotetramer.

The protein resides in the cytoplasm. The catalysed reaction is L-citrulline + L-aspartate + ATP = 2-(N(omega)-L-arginino)succinate + AMP + diphosphate + H(+). It participates in amino-acid biosynthesis; L-arginine biosynthesis; L-arginine from L-ornithine and carbamoyl phosphate: step 2/3. This is Argininosuccinate synthase from Clostridium botulinum (strain ATCC 19397 / Type A).